An 82-amino-acid polypeptide reads, in one-letter code: uncharacterized protein (82 aa).

2 helical membrane passes run 8–28 and 50–70; these read LLSA…LPAP and LYTV…YLVL.

It localises to the cell membrane. This is an uncharacterized protein from Klebsiella pneumoniae.